The following is a 148-amino-acid chain: Large ribosomal subunit protein uL15 (148 aa).

A compositionally biased stretch (basic residues) spans 1–30 (MPSRLRKTRKLRGHVSHGHGRIGKHRKHPG). The tract at residues 1–38 (MPSRLRKTRKLRGHVSHGHGRIGKHRKHPGGRGNAGGL) is disordered. His39 carries the post-translational modification (3S)-3-hydroxyhistidine. Lys47 and Lys55 each carry N6-acetyllysine. Ser68 bears the Phosphoserine mark. An N6-acetyllysine modification is found at Lys110.

This sequence belongs to the universal ribosomal protein uL15 family. As to quaternary structure, component of the large ribosomal subunit. In terms of processing, hydroxylated on His-39 by MINA.

The protein localises to the cytoplasm. In terms of biological role, component of the large ribosomal subunit. The ribosome is a large ribonucleoprotein complex responsible for the synthesis of proteins in the cell. The chain is Large ribosomal subunit protein uL15 (RPL27A) from Homo sapiens (Human).